The chain runs to 504 residues: Glutamate--tRNA ligase (504 aa).

The short motif at 14 to 24 (PSPTGYLHVGG) is the 'HIGH' region element. A 'KMSKS' region motif is present at residues 261–265 (KLSKR). Residue K264 participates in ATP binding.

Belongs to the class-I aminoacyl-tRNA synthetase family. Glutamate--tRNA ligase type 1 subfamily. In terms of assembly, monomer.

It localises to the cytoplasm. The enzyme catalyses tRNA(Glu) + L-glutamate + ATP = L-glutamyl-tRNA(Glu) + AMP + diphosphate. Functionally, catalyzes the attachment of glutamate to tRNA(Glu) in a two-step reaction: glutamate is first activated by ATP to form Glu-AMP and then transferred to the acceptor end of tRNA(Glu). In Chlorobium luteolum (strain DSM 273 / BCRC 81028 / 2530) (Pelodictyon luteolum), this protein is Glutamate--tRNA ligase.